Consider the following 437-residue polypeptide: GTPase Der (437 aa).

EngA-type G domains lie at 3–168 (PLIA…PVQE) and 178–353 (TNLA…ENRS). Residues 9–16 (GRPNVGKS), 56–60 (DTGGY), 120–123 (NKVE), 184–191 (GRPNVGKS), 231–235 (DTAGL), and 296–299 (NKWD) contribute to the GTP site. The region spanning 354-437 (RKITTSALNR…VTVSLRFFKK (84 aa)) is the KH-like domain.

Belongs to the TRAFAC class TrmE-Era-EngA-EngB-Septin-like GTPase superfamily. EngA (Der) GTPase family. In terms of assembly, associates with the 50S ribosomal subunit.

Its function is as follows. GTPase that plays an essential role in the late steps of ribosome biogenesis. The sequence is that of GTPase Der from Chlorobium phaeobacteroides (strain DSM 266 / SMG 266 / 2430).